Here is a 1320-residue protein sequence, read N- to C-terminus: Junctional cadherin 5-associated protein (1320 aa).

Disordered stretches follow at residues 1–124 (MYSV…GSGS), 183–202 (KKPR…KRPQ), 209–233 (YPFV…ALSP), 252–426 (GVPK…SIQY), 452–492 (DDTS…NEQS), 676–720 (ASSP…PTPT), 741–802 (NQKP…STTG), and 835–942 (ELQE…QKSQ). Polar residues-rich tracts occupy residues 58–71 (RTSL…NSEN) and 95–107 (NQPS…QPQS). Residues 108-119 (GRDDIYWSRGRQ) show a composition bias toward basic and acidic residues. The span at 255-267 (KVPPYPPSFPSPS) shows a compositional bias: pro residues. A compositionally biased stretch (basic and acidic residues) spans 308–329 (FQDHQHRDPRGSYPTRSKDPSH). Positions 338–356 (LEPPVYVPPPSYRSPPQHI) are enriched in pro residues. A compositionally biased stretch (polar residues) spans 369–378 (VSSNQSQQQV). Residues 404–415 (GSPPQGLPPQPY) are compositionally biased toward pro residues. Positions 454–465 (TSYNPGLLTTQE) are enriched in polar residues. Thr484 is modified (phosphothreonine). Ser486 bears the Phosphoserine mark. Polar residues predominate over residues 741-782 (NQKPSVPHLQGQTSLSPSRNSAFSRTSSAINQASMSKGTSDQ). The span at 849–859 (EDSEAEQPEDC) shows a compositional bias: acidic residues. Ser851 is subject to Phosphoserine. Polar residues predominate over residues 865–877 (KSWALQGTRTAQQ). Phosphoserine occurs at positions 1027 and 1033. Disordered stretches follow at residues 1085–1116 (ARRT…SLAL) and 1153–1174 (SDVD…KDEE). Ser1245 and Ser1248 each carry phosphoserine. The segment at 1275 to 1320 (DEAWQAGHLPSVSQNENGHPEVPRDKMSDQDLWCADSYDPSRVERV) is disordered. Residues 1292 to 1303 (GHPEVPRDKMSD) show a composition bias toward basic and acidic residues.

The protein localises to the cell junction. The protein resides in the adherens junction. The chain is Junctional cadherin 5-associated protein from Mus musculus (Mouse).